The primary structure comprises 381 residues: S-(hydroxymethyl)glutathione dehydrogenase (381 aa).

Cys49 lines the Zn(2+) pocket. Residue His50 coordinates NAD(+). Residues His71, Glu72, Cys101, Cys104, Cys107, Cys115, and Cys178 each coordinate Zn(2+). NAD(+)-binding positions include 203–208 (GGGIVG), Asp227, and 298–300 (IGV).

This sequence belongs to the zinc-containing alcohol dehydrogenase family. Class-III subfamily. Zn(2+) serves as cofactor.

It carries out the reaction a primary alcohol + NAD(+) = an aldehyde + NADH + H(+). The catalysed reaction is a secondary alcohol + NAD(+) = a ketone + NADH + H(+). It catalyses the reaction S-(hydroxymethyl)glutathione + NADP(+) = S-formylglutathione + NADPH + H(+). The enzyme catalyses S-(hydroxymethyl)glutathione + NAD(+) = S-formylglutathione + NADH + H(+). It carries out the reaction S-nitrosoglutathione + NADH + H(+) = S-(hydroxysulfenamide)glutathione + NAD(+). Oxidizes long-chain alcohols and, in the presence of glutathione, is able to oxidize formaldehyde. Also acts as a S-nitroso-glutathione reductase by catalyzing the NADH-dependent reduction of S-nitrosoglutathione, thereby regulating protein S-nitrosylation. This is S-(hydroxymethyl)glutathione dehydrogenase (FDH1) from Candida maltosa (Yeast).